Reading from the N-terminus, the 709-residue chain is Polyribonucleotide nucleotidyltransferase (709 aa).

2 residues coordinate Mg(2+): D486 and D492. The region spanning 553 to 612 is the KH domain; that stretch reads PRIHTIKINPDKIKDVIGKGGSVIRALTEETGTTIEIEDDGTVKIAATDGEKAKHAISRI. In terms of domain architecture, S1 motif spans 622-690; sequence GRIYAGKVTR…RQGRVRLSIK (69 aa).

This sequence belongs to the polyribonucleotide nucleotidyltransferase family. Component of the RNA degradosome, which is a multiprotein complex involved in RNA processing and mRNA degradation. Mg(2+) serves as cofactor.

It is found in the cytoplasm. The catalysed reaction is RNA(n+1) + phosphate = RNA(n) + a ribonucleoside 5'-diphosphate. Functionally, involved in mRNA degradation. Catalyzes the phosphorolysis of single-stranded polyribonucleotides processively in the 3'- to 5'-direction. The chain is Polyribonucleotide nucleotidyltransferase from Photorhabdus luminescens (Xenorhabdus luminescens).